The sequence spans 398 residues: Mitochondrial protein import protein mas5 (398 aa).

One can recognise a J domain in the interval 7–88 (GYYKVLELSP…KKKKEYDSGM (82 aa)). The CR-type zinc-finger motif lies at 139 to 219 (GKVSKFNVRT…CNGAEYIQDK (81 aa)). Residue 144–146 (FNV) participates in substrate binding. Positions 152, 155, 166, 169, 192, 195, 207, and 210 each coordinate Zn(2+). CXXCXGXG motif repeat units lie at residues 152-159 (CTTCDGKG), 166-173 (CKKCNGNG), 192-199 (CDGCDGSG), and 207-214 (CSTCNGAE). Residues 221-222 (MF) and 253-255 (VIF) each bind substrate. The segment at 367–386 (FGSMPEPERDHEDASEEGAQ) is disordered.

It belongs to the DnaJ family. Homodimer. The cofactor is Zn(2+).

It localises to the cytoplasm. Probably involved in mitosomal protein import. The sequence is that of Mitochondrial protein import protein mas5 (MAS5) from Encephalitozoon cuniculi (strain GB-M1) (Microsporidian parasite).